Here is a 506-residue protein sequence, read N- to C-terminus: Xaa-Pro aminopeptidase 3 (506 aa).

The transit peptide at 1-31 directs the protein to the mitochondrion; that stretch reads MPSLLSTPKLAPVLARLRGLSGCMSCLQRRY. The interval 54-79 is interaction with TNFRSF1B; sequence HPHLLRPGEVTPGLSQVEYALRRHKL. Y300, D331, D342, H423, H430, E450, and E474 together coordinate substrate. D331, D342, and H423 together coordinate Mn(2+). 2 residues coordinate Mn(2+): E450 and E474.

It belongs to the peptidase M24B family. In terms of assembly, homodimer. Interacts with TNFRSF1B/TNFR2 (activated) and TRAF2. Mn(2+) is required as a cofactor. Expressed in brain, kidney, heart, liver, skeletal muscle and testis.

The protein resides in the mitochondrion. It localises to the cytoplasm. It carries out the reaction Release of any N-terminal amino acid, including proline, that is linked to proline, even from a dipeptide or tripeptide.. Its function is as follows. Catalyzes the removal of a penultimate prolyl residue from the N-termini of peptides, such as Leu-Pro-Ala. Also shows low activity towards peptides with Ala or Ser at the P1 position. Promotes TNFRSF1B-mediated phosphorylation of MAPK8/JNK1 and MAPK9/JNK2, suggesting a function as an adapter protein for TNFRSF1B; the effect is independent of XPNPEP3 peptidase activity. May inhibit apoptotic cell death induced via TNF-TNFRSF1B signaling. This chain is Xaa-Pro aminopeptidase 3 (Xpnpep3), found in Mus musculus (Mouse).